A 216-amino-acid polypeptide reads, in one-letter code: Transmembrane emp24 domain-containing protein eca (216 aa).

A signal peptide spans 1-20 (MRDQFISLALILCVLHSACG). Over 21–182 (LYFHISETER…FRHTSESTNS (162 aa)) the chain is Lumenal. A GOLD domain is found at 30-126 (RKCFIEEVPD…QLRVHLDIQV (97 aa)). A coiled-coil region spans residues 134–164 (ANVAQKEKLTELQLRIRQLLDQVEQITKEQN). A helical membrane pass occupies residues 183-203 (RVLWWSLAQTVVLVCMGFWQM). At 204–216 (RHLKSFFEAKKLV) the chain is on the cytoplasmic side. The short motif at 213–216 (KKLV) is the Prevents secretion from ER element.

The protein belongs to the EMP24/GP25L family.

The protein resides in the endoplasmic reticulum membrane. Eca and bai are essential, though not redundant, for dorsoventral patterning of the embryo. Specifically required during early embryogenesis for the activity of maternal tkv, while the zygotic tkv is not affected. Involved in Golgi organization. This chain is Transmembrane emp24 domain-containing protein eca, found in Drosophila simulans (Fruit fly).